A 238-amino-acid chain; its full sequence is 2-C-methyl-D-erythritol 4-phosphate cytidylyltransferase (238 aa).

The protein belongs to the IspD/TarI cytidylyltransferase family. IspD subfamily.

It carries out the reaction 2-C-methyl-D-erythritol 4-phosphate + CTP + H(+) = 4-CDP-2-C-methyl-D-erythritol + diphosphate. It participates in isoprenoid biosynthesis; isopentenyl diphosphate biosynthesis via DXP pathway; isopentenyl diphosphate from 1-deoxy-D-xylulose 5-phosphate: step 2/6. Its function is as follows. Catalyzes the formation of 4-diphosphocytidyl-2-C-methyl-D-erythritol from CTP and 2-C-methyl-D-erythritol 4-phosphate (MEP). The polypeptide is 2-C-methyl-D-erythritol 4-phosphate cytidylyltransferase (Acinetobacter baumannii (strain ATCC 17978 / DSM 105126 / CIP 53.77 / LMG 1025 / NCDC KC755 / 5377)).